We begin with the raw amino-acid sequence, 275 residues long: 4-hydroxy-3-methylbut-2-enyl diphosphate reductase (275 aa).

Residue C12 participates in [4Fe-4S] cluster binding. Residues H40 and H70 each coordinate (2E)-4-hydroxy-3-methylbut-2-enyl diphosphate. Dimethylallyl diphosphate is bound by residues H40 and H70. Positions 40 and 70 each coordinate isopentenyl diphosphate. Residue C92 participates in [4Fe-4S] cluster binding. H119 contacts (2E)-4-hydroxy-3-methylbut-2-enyl diphosphate. Residue H119 participates in dimethylallyl diphosphate binding. Position 119 (H119) interacts with isopentenyl diphosphate. The active-site Proton donor is E121. (2E)-4-hydroxy-3-methylbut-2-enyl diphosphate is bound at residue T151. Residue C181 coordinates [4Fe-4S] cluster. Positions 209, 210, 211, and 251 each coordinate (2E)-4-hydroxy-3-methylbut-2-enyl diphosphate. Residues S209, S210, N211, and S251 each coordinate dimethylallyl diphosphate. 4 residues coordinate isopentenyl diphosphate: S209, S210, N211, and S251.

This sequence belongs to the IspH family. The cofactor is [4Fe-4S] cluster.

It carries out the reaction isopentenyl diphosphate + 2 oxidized [2Fe-2S]-[ferredoxin] + H2O = (2E)-4-hydroxy-3-methylbut-2-enyl diphosphate + 2 reduced [2Fe-2S]-[ferredoxin] + 2 H(+). The enzyme catalyses dimethylallyl diphosphate + 2 oxidized [2Fe-2S]-[ferredoxin] + H2O = (2E)-4-hydroxy-3-methylbut-2-enyl diphosphate + 2 reduced [2Fe-2S]-[ferredoxin] + 2 H(+). It participates in isoprenoid biosynthesis; dimethylallyl diphosphate biosynthesis; dimethylallyl diphosphate from (2E)-4-hydroxy-3-methylbutenyl diphosphate: step 1/1. The protein operates within isoprenoid biosynthesis; isopentenyl diphosphate biosynthesis via DXP pathway; isopentenyl diphosphate from 1-deoxy-D-xylulose 5-phosphate: step 6/6. Catalyzes the conversion of 1-hydroxy-2-methyl-2-(E)-butenyl 4-diphosphate (HMBPP) into a mixture of isopentenyl diphosphate (IPP) and dimethylallyl diphosphate (DMAPP). Acts in the terminal step of the DOXP/MEP pathway for isoprenoid precursor biosynthesis. In Thermotoga petrophila (strain ATCC BAA-488 / DSM 13995 / JCM 10881 / RKU-1), this protein is 4-hydroxy-3-methylbut-2-enyl diphosphate reductase.